The primary structure comprises 600 residues: Elongation factor 4 (600 aa).

One can recognise a tr-type G domain in the interval 5–187 (KYIRNFSIVA…EIVEKIPAPE (183 aa)). GTP is bound by residues 17 to 22 (DHGKST) and 134 to 137 (NKVD).

It belongs to the TRAFAC class translation factor GTPase superfamily. Classic translation factor GTPase family. LepA subfamily.

The protein localises to the cell membrane. The enzyme catalyses GTP + H2O = GDP + phosphate + H(+). Its function is as follows. Required for accurate and efficient protein synthesis under certain stress conditions. May act as a fidelity factor of the translation reaction, by catalyzing a one-codon backward translocation of tRNAs on improperly translocated ribosomes. Back-translocation proceeds from a post-translocation (POST) complex to a pre-translocation (PRE) complex, thus giving elongation factor G a second chance to translocate the tRNAs correctly. Binds to ribosomes in a GTP-dependent manner. The sequence is that of Elongation factor 4 from Clostridium perfringens (strain 13 / Type A).